Here is a 307-residue protein sequence, read N- to C-terminus: UAP56-interacting factor (307 aa).

Residues 1 to 25 (MSGFGAAALLSGSSAAAGTRSGSSD) are compositionally biased toward low complexity. Disordered regions lie at residues 1-28 (MSGFGAAALLSGSSAAAGTRSGSSDSLE) and 41-85 (NKKE…KNHL). A UAP56-binding motif motif is present at residues 26-44 (SLEKIDMSLDDIIKLNKKE). The span at 57–78 (LQQNRTQQFRTPGSKWGIQQQK) shows a compositional bias: polar residues.

It belongs to the UIF family. As to expression, widely expressed.

Its subcellular location is the nucleus. It is found in the nucleoplasm. The protein localises to the nucleus speckle. In terms of biological role, required for mRNA export from the nucleus to the cytoplasm. Acts as an adapter that uses the DDX39B/UAP56-NFX1 pathway to ensure efficient mRNA export and delivering to the nuclear pore. In Gallus gallus (Chicken), this protein is UAP56-interacting factor (FYTTD1).